A 338-amino-acid chain; its full sequence is Fructose-1,6-bisphosphatase class 1 (338 aa).

Residues E91, D113, L115, and D116 each contribute to the Mg(2+) site. Substrate is bound by residues D116–S119, N211, Y244, and K277. E283 provides a ligand contact to Mg(2+).

The protein belongs to the FBPase class 1 family. As to quaternary structure, homotetramer. Mg(2+) is required as a cofactor.

It is found in the cytoplasm. The enzyme catalyses beta-D-fructose 1,6-bisphosphate + H2O = beta-D-fructose 6-phosphate + phosphate. It functions in the pathway carbohydrate biosynthesis; gluconeogenesis. The sequence is that of Fructose-1,6-bisphosphatase class 1 from Oleidesulfovibrio alaskensis (strain ATCC BAA-1058 / DSM 17464 / G20) (Desulfovibrio alaskensis).